The following is a 146-amino-acid chain: Phospholipase A2 (146 aa).

A signal peptide spans 1–18; the sequence is MAFLVFAFLTLMAVETYG. Cystine bridges form between Cys44–Cys137, Cys46–Cys62, Cys61–Cys117, Cys67–Cys144, Cys68–Cys110, Cys77–Cys103, and Cys95–Cys108. 3 residues coordinate Ca(2+): Tyr45, Gly47, and Gly49. Residue His65 is part of the active site. Asp66 contacts Ca(2+). Asn85 is a glycosylation site (N-linked (GlcNAc...) asparagine). Residue Asp111 is part of the active site. Asn126 carries N-linked (GlcNAc...) asparagine glycosylation.

The cofactor is Ca(2+). N-glycosylated. Glycosylated with mannose chains including Man2(GlcNAc), Man2(GlcNAc)2, Man2(GlcNAc)3, Man2(GlcNAc)4 and Man2(GlcNAc)5. Expressed by the skin glands (at protein level).

It is found in the secreted. The enzyme catalyses a 1,2-diacyl-sn-glycero-3-phosphocholine + H2O = a 1-acyl-sn-glycero-3-phosphocholine + a fatty acid + H(+). PLA2 catalyzes the calcium-dependent hydrolysis of the 2-acyl groups in 3-sn-phosphoglycerides. This chain is Phospholipase A2, found in Pithecopus azureus (Orange-legged monkey tree frog).